We begin with the raw amino-acid sequence, 146 residues long: Hemoglobin subunit beta-2 (146 aa).

Residues 2-146 enclose the Globin domain; the sequence is KWTDKERAVI…VVSALGKQYC (145 aa). Heme b-binding residues include His-63 and His-92.

This sequence belongs to the globin family. As to quaternary structure, heterotetramer of two alpha chains and two beta chains. Red blood cells.

Functionally, involved in oxygen transport from gills to the various peripheral tissues. The chain is Hemoglobin subunit beta-2 (hbb2) from Lycodes reticulatus (Arctic eelpout).